Consider the following 101-residue polypeptide: Ubiquitin-related modifier 1 homolog (101 aa).

A 1-thioglycine modification is found at Gly-101. Gly-101 is covalently cross-linked (Glycyl lysine isopeptide (Gly-Lys) (interchain with K-? in acceptor proteins)).

Belongs to the URM1 family. Interacts with cer. In terms of processing, C-terminal thiocarboxylation occurs in 2 steps, it is first acyl-adenylated (-COAMP) via the hesA/moeB/thiF part of the MOCS3 homolog, then thiocarboxylated (-COSH) via the rhodanese domain of the MOCS3 homolog.

The protein resides in the cytoplasm. It participates in tRNA modification; 5-methoxycarbonylmethyl-2-thiouridine-tRNA biosynthesis. Functionally, acts as a sulfur carrier required for 2-thiolation of mcm(5)S(2)U at tRNA wobble positions of cytosolic tRNA(Lys), tRNA(Glu) and tRNA(Gln). Serves as sulfur donor in tRNA 2-thiolation reaction by being thiocarboxylated (-COSH) at its C-terminus by MOCS3. The sulfur is then transferred to tRNA to form 2-thiolation of mcm(5)S(2)U. Also acts as a ubiquitin-like protein (UBL) that is covalently conjugated via an isopeptide bond to lysine residues of target proteins such as Prx2/Jafrac1, Ciao1, Eip71CD and GILT1. The thiocarboxylated form serves as substrate for conjugation and oxidative stress specifically induces the formation of UBL-protein conjugates. This is Ubiquitin-related modifier 1 homolog from Drosophila simulans (Fruit fly).